A 223-amino-acid polypeptide reads, in one-letter code: Uracil-DNA glycosylase (223 aa).

The active-site Proton acceptor is Asp-61.

This sequence belongs to the uracil-DNA glycosylase (UDG) superfamily. UNG family.

It localises to the cytoplasm. The catalysed reaction is Hydrolyzes single-stranded DNA or mismatched double-stranded DNA and polynucleotides, releasing free uracil.. Functionally, excises uracil residues from the DNA which can arise as a result of misincorporation of dUMP residues by DNA polymerase or due to deamination of cytosine. The chain is Uracil-DNA glycosylase from Tolumonas auensis (strain DSM 9187 / NBRC 110442 / TA 4).